A 121-amino-acid polypeptide reads, in one-letter code: Large ribosomal subunit protein bL20 (121 aa).

Belongs to the bacterial ribosomal protein bL20 family.

Its function is as follows. Binds directly to 23S ribosomal RNA and is necessary for the in vitro assembly process of the 50S ribosomal subunit. It is not involved in the protein synthesizing functions of that subunit. This Mycoplasma mycoides subsp. mycoides SC (strain CCUG 32753 / NCTC 10114 / PG1) protein is Large ribosomal subunit protein bL20.